We begin with the raw amino-acid sequence, 735 residues long: Translation initiation factor IF-2, chloroplastic (735 aa).

The tr-type G domain maps to 239–411 (RRAPIVTILG…ILLMADIENY (173 aa)). The tract at residues 248 to 255 (GHVDHGKT) is G1. Residue 248-255 (GHVDHGKT) coordinates GTP. Positions 273 to 277 (GITQK) are G2. A G3 region spans residues 298–301 (DTPG). GTP contacts are provided by residues 298–302 (DTPGH) and 352–355 (NKID). Positions 352–355 (NKID) are G4. Residues 388 to 390 (SAS) are G5.

Belongs to the TRAFAC class translation factor GTPase superfamily. Classic translation factor GTPase family. IF-2 subfamily.

The protein resides in the plastid. The protein localises to the chloroplast. One of the essential components for the initiation of protein synthesis. Protects formylmethionyl-tRNA from spontaneous hydrolysis and promotes its binding to the 30S ribosomal subunits. Also involved in the hydrolysis of GTP during the formation of the 70S ribosomal complex. This is Translation initiation factor IF-2, chloroplastic (infB) from Guillardia theta (Cryptophyte).